Consider the following 650-residue polypeptide: MSVSTAKRSLDVVSPGSLAEFEGSKSRHDEIENEHRRTGTRDGEDSEQPKKKGSKTSKKQDLDPETKQKRTAQNRAAQRAFRERKERKMKELEKKVQSLESIQQQNEVEATFLRDQLITLVNELKKYRPETRNDSKVLEYLARRDPNLHFSKNNVNHSNSEPIDTPNDDIQENVKQKMNFTFQYPLDNDNDNDNSKNVGKQLPSPNDPSHSAPMPINQTQKKLSDATDSSSATLDSLSNSNDVLNNTPNSSTSMDWLDNVIYTNRFVSGDDGSNSKTKNLDSNMFSNDFNFENQFDEQVSEFCSKMNQVCGTRQCPIPKKPISALDKEVFASSSILSSNSPALTNTWESHSNITDNTPANVIATDATKYENSFSGFGRLGFDMSANHYVVNDNSTGSTDSTGSTGNKNKKNNNNSDDVLPFISESPFDMNQVTNFFSPGSTGIGNNAASNTNPSLLQSSKEDIPFINANLAFPDDNSTNIQLQPFSESQSQNKFDYDMFFRDSSKEGNNLFGEFLEDDDDDKKAANMSDDESSLIKNQLINEEPELPKQYLQSVPGNESEISQKNGSSLQNADKINNGNDNDNDNDVVPSKEGSLLRCSEIWDRITTHPKYSDIDVDGLCSELMAKAKCSERGVVINAEDVQLALNKHMN.

The segment at 1 to 89 (MSVSTAKRSL…AFRERKERKM (89 aa)) is disordered. A phosphoserine mark is found at serine 9, serine 14, and serine 17. Basic and acidic residues-rich tracts occupy residues 22–50 (EGSKSRHDEIENEHRRTGTRDGEDSEQPK), 58–68 (KKQDLDPETKQ), and 80–89 (AFRERKERKM). Short sequence motifs (bipartite nuclear localization signal) lie at residues 35–42 (HRRTGTRD) and 68–75 (QKRTAQNR). The region spanning 64 to 127 (PETKQKRTAQ…ITLVNELKKY (64 aa)) is the bZIP domain. Positions 67–90 (KQKRTAQNRAAQRAFRERKERKMK) are basic motif. A leucine-zipper region spans residues 92 to 120 (LEKKVQSLESIQQQNEVEATFLRDQLITL). 2 disordered regions span residues 149 to 169 (HFSKNNVNHSNSEPIDTPNDD) and 183 to 251 (QYPL…PNSS). A compositionally biased stretch (polar residues) spans 150–162 (FSKNNVNHSNSEP). Threonine 165 is modified (phosphothreonine). Residues 195–209 (SKNVGKQLPSPNDPS) show a composition bias toward polar residues. Serine 204 carries the phosphoserine modification. Residues 220–378 (QKKLSDATDS…YENSFSGFGR (159 aa)) are transcription activation 1. Residues 226 to 246 (ATDSSSATLDSLSNSNDVLNN) are compositionally biased toward low complexity. Residues 303 to 315 (CSKMNQVCGTRQC) form a n-CRD region. Intrachain disulfides connect cysteine 303/cysteine 598, cysteine 310/cysteine 629, cysteine 598/cysteine 620, cysteine 598/cysteine 629, and cysteine 620/cysteine 629. A Phosphoserine modification is found at serine 372. Over residues 392-414 (DNSTGSTDSTGSTGNKNKKNNNN) the composition is skewed to low complexity. Disordered regions lie at residues 392-419 (DNSTGSTDSTGSTGNKNKKNNNNSDDVL), 510-532 (LFGEFLEDDDDDKKAANMSDDES), and 551-591 (LQSV…VPSK). The interval 430–537 (NQVTNFFSPG…SDDESSLIKN (108 aa)) is transcription activation 2. Phosphoserine is present on serine 528. Polar residues predominate over residues 551–570 (LQSVPGNESEISQKNGSSLQ). Over residues 571 to 580 (NADKINNGND) the composition is skewed to low complexity. A c-CRD region spans residues 598–629 (CSEIWDRITTHPKYSDIDVDGLCSELMAKAKC). Residues 614–621 (IDVDGLCS) carry the Nuclear export signal motif.

The protein belongs to the bZIP family. YAP subfamily. As to quaternary structure, interacts independent of oxidation state in the cytoplasm with the karyopherin PSE1/KAP121 (and less strongly with KAP123). The reduced form of YAP1 interacts in the nucleus with the nuclear export protein CRM1, and in the cytoplasm with YBP1 and the peroxiredoxin HYR1/GPX3/ORP1. Interacts with RBG1. In terms of processing, depending on the oxidative stress inducing agent, YAP1 can undergo two distinct conformational changes, both involving disulfide bond formation, and both masking the nuclear export signal, thus abolishing nuclear export by CRM1/exportin 1. The disulfide stress-inducing agent diamide leads to the formation of one of three possible disulfide bonds in the c-CRD. Peroxide stress induces the formation of the HYR1/GPX3- and YBP1-dependent interdomain disulfide bond between Cys-303 and Cys-598 (causing nuclear localization of YAP1), and the possibly stabilizing bond between Cys-310 and Cys-629 (required for full activity of YAP1).

The protein resides in the nucleus. Its subcellular location is the cytoplasm. Functionally, transcription activator involved in oxidative stress response and redox homeostasis. Regulates the transcription of genes encoding antioxidant enzymes and components of the cellular thiol-reducing pathways, including the thioredoxin system (TRX2, TRR1), the glutaredoxin system (GSH1, GLR1), superoxide dismutase (SOD1, SOD2), glutathione peroxidase (GPX2), and thiol-specific peroxidases (TSA1, AHP1). The induction of some of these genes requires the cooperative action of both, YAP1 and SKN7. Preferentially binds to promoters with the core binding site 5'-TTA[CG]TAA-3'. Activity of the transcription factor is controlled through oxidation of specific cysteine residues resulting in the alteration of its subcellular location. Oxidative stress (as well as carbon stress, but not increased temperature, acidic pH, or ionic stress) induces nuclear accumulation and as a result YAP1 transcriptional activity. Activation by hydrogen peroxide or thiol-reactive chemicals elicit distinct adaptive gene responses. Nuclear export is restored when disulfide bonds are reduced by thioredoxin (TRX2), whose expression is controlled by YAP1, providing a mechanism for negative autoregulation. When overexpressed, YAP1 confers pleiotropic drug-resistance and increases cellular tolerance to cadmium, iron chelators and zinc. In Saccharomyces cerevisiae (strain ATCC 204508 / S288c) (Baker's yeast), this protein is AP-1-like transcription factor YAP1.